The following is a 902-amino-acid chain: Protein translocase subunit SecA (902 aa).

ATP contacts are provided by residues Q87, 105–109 (GEGKT), and D512. Residues 850–902 (RLAKQQQLSHEVTKESQMSAVDGQVASGKKVGRNEPCPCGSGKKYKHCHGKLG) form a disordered region. Polar residues predominate over residues 853–868 (KQQQLSHEVTKESQMS). Zn(2+) is bound by residues C886, C888, C897, and H898. Basic residues predominate over residues 892 to 902 (KKYKHCHGKLG).

Belongs to the SecA family. Monomer and homodimer. Part of the essential Sec protein translocation apparatus which comprises SecA, SecYEG and auxiliary proteins SecDF-YajC and YidC. It depends on Zn(2+) as a cofactor.

Its subcellular location is the cell inner membrane. The protein localises to the cytoplasm. The enzyme catalyses ATP + H2O + cellular proteinSide 1 = ADP + phosphate + cellular proteinSide 2.. Part of the Sec protein translocase complex. Interacts with the SecYEG preprotein conducting channel. Has a central role in coupling the hydrolysis of ATP to the transfer of proteins into and across the cell membrane, serving both as a receptor for the preprotein-SecB complex and as an ATP-driven molecular motor driving the stepwise translocation of polypeptide chains across the membrane. In Proteus mirabilis (strain HI4320), this protein is Protein translocase subunit SecA.